The primary structure comprises 166 residues: Small ribosomal subunit protein uS5 (166 aa).

Residues 11–74 (LQEKLIAVNR…EQAKRNLSKV (64 aa)) form the S5 DRBM domain.

It belongs to the universal ribosomal protein uS5 family. In terms of assembly, part of the 30S ribosomal subunit. Contacts proteins S4 and S8.

Functionally, with S4 and S12 plays an important role in translational accuracy. Located at the back of the 30S subunit body where it stabilizes the conformation of the head with respect to the body. This is Small ribosomal subunit protein uS5 from Aeromonas salmonicida (strain A449).